The following is an 823-amino-acid chain: Apoptosis-resistant E3 ubiquitin protein ligase 1 (823 aa).

The Filamin repeat unit spans residues 52–158 (GNYLDPRSCK…VAYSPYYKIF (107 aa)). Positions 315–345 (PPMHMTSSQRRPSTAVDEEDEDSPSECHTPE) are disordered. The interval 483–789 (SISDWSKNFE…THSTLPTAHT (307 aa)) is interaction with SOCS2. The 341-residue stretch at 483-823 (SISDWSKNFE…SEGCEGFGML (341 aa)) folds into the HECT domain. The Glycyl thioester intermediate role is filled by Cys790.

Interacts with SOCS2. Interacts (via HECT domain) with HTRA2, DIABLO/SMAC and SEPTIN4; in the cytoplasm following induction of apoptosis. In terms of processing, autoubiquitinated in vitro in the presence of E2 enzyme UBE2D1/UBCH5A.

The catalysed reaction is S-ubiquitinyl-[E2 ubiquitin-conjugating enzyme]-L-cysteine + [acceptor protein]-L-lysine = [E2 ubiquitin-conjugating enzyme]-L-cysteine + N(6)-ubiquitinyl-[acceptor protein]-L-lysine.. Its pathway is protein modification; protein ubiquitination. Functionally, E3 ubiquitin-protein ligase that catalyzes 'Lys-11'- or 'Lys-33'-linked polyubiquitin chains, with some preference for 'Lys-33' linkages. E3 ubiquitin-protein ligases accept ubiquitin from an E2 ubiquitin-conjugating enzyme in the form of a thioester and then directly transfers the ubiquitin to targeted substrates. Ubiquitinates SEPTIN4, DIABLO/SMAC and HTRA2 in vitro. Modulates pulmonary inflammation by targeting SOCS2 for ubiquitination and subsequent degradation by the proteasome. The protein is Apoptosis-resistant E3 ubiquitin protein ligase 1 of Homo sapiens (Human).